Here is a 519-residue protein sequence, read N- to C-terminus: MSGSRYPAAVDVAIVGSGPTASAYARILSEEAPGASIAMFEVGPTVSNPPGAHVKNIEDPERRSHAQRASEGPGAGAETVNSPGAVKSGERRARPGTYLLQDGYVFPGEDGMPVAAMSSNVGGMAAHWTAACPRPGGTERIPFLPDLEQLLDDADRLLGVTTHAFDGAPFSDLVRERLAAVVDNGRKPAFRVQPMPLAVHRREDAGLVWSGSDVVMGEVTRENPQFDLFDESLVTRVLVEDGVAAGVEVQDRRSGATHRVSARYVVVGGDALRTPQLLWASGIRPDALGRYLNDQAQVVFASRLRGVTDLQGPPAAGGTLSEQSGVAWVPYTDEAPFHGQVMQLDASPVPLAEDDPVVPGSIVGLGLFCAKDLQREDRVAFDNTVHDSYGMPAMRIHYRLTQRDHEILDRAKREIVRLGKAVGEPLVERPFVLPPGASLHYQGTTRMGETDDGESVCSPDSQVWEVPGLFVAGNGVIPTATACNPTLTAVALAVRGARKIAEELTSALLMSESDNRMVK.

E41 provides a ligand contact to FAD. Residues 43-93 (GPTVSNPPGAHVKNIEDPERRSHAQRASEGPGAGAETVNSPGAVKSGERRA) form a disordered region. A compositionally biased stretch (basic and acidic residues) spans 55–64 (KNIEDPERRS). FAD contacts are provided by S118, N120, M124, T129, A131, and V234. The active-site Proton acceptor is H440. N474 and T486 together coordinate FAD.

It belongs to the GMC oxidoreductase family. In terms of assembly, monomer. FAD serves as cofactor.

It carries out the reaction isovitexin + O2 = 3''-dehydroisovitexin + H2O2. It catalyses the reaction isoorientin + O2 = 3''-dehydroisoorientin + H2O2. The enzyme catalyses mangiferin + O2 = 3'-dehydromangiferin + H2O2. In terms of biological role, FAD-dependent C-glycoside-metabolizing enzyme that participates in the degradation of certain C-glycosides by catalyzing the oxidation of the hydroxyl group at the C3 position of the sugar moiety. Shows oxidase activity toward various C-glycosides such as isovitexin, isoorientin and mangiferin but cannot use carminic acid, puerarin, orientin or aloesin. Shows weak activity (100 to 1000-fold lower) with O-glycosides. Probably plays a crucial role in the metabolism of C-glycosides in nature. The chain is C-glycoside 3-oxidase from Arthrobacter globiformis (strain ATCC 8010 / DSM 20124 / JCM 1332 / NBRC 12137 / NCIMB 8907 / NRRL B-2979 / 168).